Consider the following 219-residue polypeptide: Ras-related protein Rab-3 (219 aa).

GTP contacts are provided by residues 29 to 37, 48 to 54, 77 to 81, 135 to 138, and 165 to 167; these read GNSSVGKTS, TSAFVST, DTAGQ, NKCD, and SAK. Positions 51-59 match the Effector region motif; it reads FVSTVGIDF. The tract at residues 191–219 is disordered; the sequence is LDKDPQQQPKGQKLEANPTQKPAQQQCNC. Residues 207–219 show a composition bias toward polar residues; the sequence is NPTQKPAQQQCNC. S-geranylgeranyl cysteine attachment occurs at residues C217 and C219. C219 bears the Cysteine methyl ester mark.

This sequence belongs to the small GTPase superfamily. Rab family.

The protein resides in the cell membrane. Its function is as follows. Involved in exocytosis by regulating a late step in synaptic vesicle fusion. Could play a role in neurotransmitter release by regulating membrane flow in the nerve terminal. Plays a role in the recruitment of endophilin unc-57 to synaptic vesicles. Probably by controlling dense-core vesicle trafficking, plays a role in the AVG neuron-mediated formation of the right axon tract of the ventral nerve cord. This chain is Ras-related protein Rab-3 (rab-3), found in Caenorhabditis elegans.